Consider the following 464-residue polypeptide: Fumarate hydratase class II (464 aa).

Residues 96-98 (SGT), 127-130 (HPND), 137-139 (SSN), and threonine 185 contribute to the substrate site. Histidine 186 (proton donor/acceptor) is an active-site residue. Serine 316 is a catalytic residue. Substrate is bound by residues serine 317 and 322 to 324 (KVN).

It belongs to the class-II fumarase/aspartase family. Fumarase subfamily. Homotetramer.

Its subcellular location is the cytoplasm. The enzyme catalyses (S)-malate = fumarate + H2O. It participates in carbohydrate metabolism; tricarboxylic acid cycle; (S)-malate from fumarate: step 1/1. In terms of biological role, involved in the TCA cycle. Catalyzes the stereospecific interconversion of fumarate to L-malate. The polypeptide is Fumarate hydratase class II (Pseudomonas syringae pv. tomato (strain ATCC BAA-871 / DC3000)).